Consider the following 726-residue polypeptide: Delta-1-pyrroline-5-carboxylate synthase B (726 aa).

The glutamate 5-kinase stretch occupies residues 1–296 (MTEIDRSRAF…WAPVVDTTSR (296 aa)). 3 residues coordinate substrate: Ser-60, Asp-157, and Asn-176. ATP-binding positions include 196–197 (SD) and 236–242 (RGGMTAK). The tract at residues 297–717 (DMAVAARESS…YTHKDLPVLQ (421 aa)) is gamma-glutamyl phosphate reductase.

It in the N-terminal section; belongs to the glutamate 5-kinase family. In the C-terminal section; belongs to the gamma-glutamyl phosphate reductase family.

It carries out the reaction L-glutamate + ATP = L-glutamyl 5-phosphate + ADP. It catalyses the reaction L-glutamate 5-semialdehyde + phosphate + NADP(+) = L-glutamyl 5-phosphate + NADPH + H(+). Its pathway is amino-acid biosynthesis; L-proline biosynthesis; L-glutamate 5-semialdehyde from L-glutamate: step 1/2. The protein operates within amino-acid biosynthesis; L-proline biosynthesis; L-glutamate 5-semialdehyde from L-glutamate: step 2/2. P5CS plays a key role in proline biosynthesis, leading to osmoregulation in plants. The protein is Delta-1-pyrroline-5-carboxylate synthase B (P5CSB) of Arabidopsis thaliana (Mouse-ear cress).